Here is a 595-residue protein sequence, read N- to C-terminus: Metacaspase-1 (595 aa).

Catalysis depends on residues histidine 411 and cysteine 466.

It belongs to the peptidase C14B family. Monomer.

With respect to regulation, activated by Ca(2+). Cysteine protease that cleaves specifically after arginine or lysine residues. The polypeptide is Metacaspase-1 (Plasmodium berghei (strain Anka)).